We begin with the raw amino-acid sequence, 439 residues long: Probable tRNA pseudouridine synthase D (439 aa).

Aspartate 87 functions as the Nucleophile in the catalytic mechanism. One can recognise a TRUD domain in the interval 166–391 (GVPNFFGIQR…SKGLRREILL (226 aa)).

The protein belongs to the pseudouridine synthase TruD family.

The enzyme catalyses uridine(13) in tRNA = pseudouridine(13) in tRNA. In terms of biological role, could be responsible for synthesis of pseudouridine from uracil-13 in transfer RNAs. This Methanococcoides burtonii (strain DSM 6242 / NBRC 107633 / OCM 468 / ACE-M) protein is Probable tRNA pseudouridine synthase D.